Reading from the N-terminus, the 583-residue chain is Transmembrane protein 108 (583 aa).

Residues 7–27 (ALYCQLLSFLLTLALTEALVF) form a helical membrane-spanning segment. The segment at 31 to 176 (EPSPRESLQV…ATIRRPPRPP (146 aa)) is interacts with SH3GL2. 2 disordered regions span residues 71-360 (VTPT…GVFA) and 376-404 (VPSEGLPQGTSLAPQAPAHPTWASESTVS). Composition is skewed to polar residues over residues 80-93 (PSSQATAPMATTTP) and 100-122 (PTNTISTIMATASTPHSEGSLST). Residues 177–187 (GSSRKGAGSSP) show a composition bias toward low complexity. The tract at residues 180-413 (RKGAGSSPRP…SQAEEKAVAT (234 aa)) is interacts with DST (isoform 1). Polar residues-rich tracts occupy residues 251-273 (YSSSPQPQTVAATSAPSRTSWVP), 310-319 (ASGTPASQQR), and 333-357 (DGSSHSDSWLTVTPGTSRPPSTNSG). The chain crosses the membrane as a helical span at residues 477–497 (IAWVILAISVPISSCSVLLTV). Residues 498-583 (CCLRRKKKPA…FVGNDQVSEI (86 aa)) form an interaction with CYFIP2 region.

Interacts with DST (isoform 1). Interacts with SH3GL2. Interacts (via N-terminus) with CYFIP1 and CYFIP2; the interactions associate TMEM108 with the WAVE1 complex. In terms of processing, glycosylated.

It localises to the membrane. Its subcellular location is the postsynaptic density. It is found in the endosome membrane. The protein resides in the cell projection. The protein localises to the axon. It localises to the dendrite. Its subcellular location is the early endosome. Functionally, transmembrane protein required for proper cognitive functions. Involved in the development of dentate gyrus (DG) neuron circuitry, is necessary for AMPA receptors surface expression and proper excitatory postsynaptic currents of DG granule neurons. Regulates the organization and stability of the microtubule network of sensory neurons to allow axonal transport. Through the interaction with DST, mediates the docking of the dynein/dynactin motor complex to vesicle cargos for retrograde axonal transport. In hippocampal neurons, required for BDNF-dependent dendrite outgrowth. Cooperates with SH3GL2 and recruits the WAVE1 complex to facilitate actin-dependent BDNF:NTRK2 early endocytic trafficking and mediate signaling from early endosomes. The polypeptide is Transmembrane protein 108 (Bos taurus (Bovine)).